The chain runs to 226 residues: Phosphoribosyl-dephospho-CoA transferase (226 aa).

Active-site residues include D148 and D150.

It belongs to the MdcG family.

It catalyses the reaction apo-[malonate decarboxylase ACP] + 2'-(5''-triphospho-alpha-D-ribosyl)-3'-dephospho-CoA = holo-[malonate decarboxylase ACP] + diphosphate. In terms of biological role, transfers 2'-(5-triphosphoribosyl)-3'-dephosphocoenzyme-A to the apo-[acyl-carrier-protein] of the malonate decarboxylase to yield holo-[acyl-carrier-protein]. The chain is Phosphoribosyl-dephospho-CoA transferase from Bradyrhizobium diazoefficiens (strain JCM 10833 / BCRC 13528 / IAM 13628 / NBRC 14792 / USDA 110).